A 327-amino-acid polypeptide reads, in one-letter code: GTPase Obg (327 aa).

The 159-residue stretch at 1 to 159 folds into the Obg domain; the sequence is MQFIDQANII…WEVQLELKLL (159 aa). The OBG-type G domain maps to 160 to 327; sequence AEVGIIGLPN…SLLSEVWKRI (168 aa). Residues 166–173, 191–195, 213–216, 280–283, and 309–311 each bind ATP; these read GLPNAGKS, FTTLI, DIPG, NKIE, and SSS. Residues serine 173 and threonine 193 each contribute to the Mg(2+) site.

This sequence belongs to the TRAFAC class OBG-HflX-like GTPase superfamily. OBG GTPase family. Monomer. Requires Mg(2+) as cofactor.

The protein localises to the cytoplasm. An essential GTPase which binds GTP, GDP and possibly (p)ppGpp with moderate affinity, with high nucleotide exchange rates and a fairly low GTP hydrolysis rate. Plays a role in control of the cell cycle, stress response, ribosome biogenesis and in those bacteria that undergo differentiation, in morphogenesis control. This chain is GTPase Obg, found in Prochlorococcus marinus (strain AS9601).